The sequence spans 119 residues: Large ribosomal subunit protein bL20c (119 aa).

The protein belongs to the bacterial ribosomal protein bL20 family.

Its subcellular location is the plastid. It is found in the chloroplast. Binds directly to 23S ribosomal RNA and is necessary for the in vitro assembly process of the 50S ribosomal subunit. It is not involved in the protein synthesizing functions of that subunit. This chain is Large ribosomal subunit protein bL20c, found in Nandina domestica (Heavenly bamboo).